The sequence spans 150 residues: Arginine repressor (150 aa).

It belongs to the ArgR family.

The protein resides in the cytoplasm. It participates in amino-acid biosynthesis; L-arginine biosynthesis [regulation]. Its function is as follows. Regulates arginine biosynthesis genes. This is Arginine repressor from Clostridium botulinum (strain Eklund 17B / Type B).